The chain runs to 519 residues: Importin subunit alpha-9 (519 aa).

The interval 1 to 29 (MADDGSASNRRDPIKSSVGNVAGQRRRKQ) is disordered. ARM repeat units follow at residues 116–156 (FPPV…NIAA), 158–197 (KPEE…NVAG), 200–239 (EDLR…NLIK), 244–283 (KAAA…YLSA), 286–326 (DIAT…NFVA), 335–374 (ILIR…NIAA), 377–416 (IEHK…NLCV), and 429–468 (QEHL…LVLR).

It belongs to the importin alpha family. Forms a complex with importin subunit beta-1.

It is found in the nucleus envelope. In terms of biological role, binds to conventional NLS motifs and mediates nuclear protein import across the nuclear envelope. Acts as a cellular receptor for the nuclear import of the virD2 protein of Agrobacterium, but is not essential for Agrobacterium-mediated root transformation. This Arabidopsis thaliana (Mouse-ear cress) protein is Importin subunit alpha-9.